A 397-amino-acid chain; its full sequence is Phosphoglycerate kinase (397 aa).

Substrate contacts are provided by residues 26 to 28 (DLN), Arg-42, 65 to 68 (HLGR), Arg-119, and Arg-152. ATP contacts are provided by residues Lys-203, Glu-325, and 351 to 354 (GGDT).

Belongs to the phosphoglycerate kinase family. In terms of assembly, monomer.

The protein localises to the cytoplasm. It catalyses the reaction (2R)-3-phosphoglycerate + ATP = (2R)-3-phospho-glyceroyl phosphate + ADP. It functions in the pathway carbohydrate degradation; glycolysis; pyruvate from D-glyceraldehyde 3-phosphate: step 2/5. The sequence is that of Phosphoglycerate kinase from Bordetella pertussis (strain Tohama I / ATCC BAA-589 / NCTC 13251).